A 100-amino-acid chain; its full sequence is Large ribosomal subunit protein uL23 (100 aa).

Belongs to the universal ribosomal protein uL23 family. Part of the 50S ribosomal subunit. Contacts protein L29, and trigger factor when it is bound to the ribosome.

In terms of biological role, one of the early assembly proteins it binds 23S rRNA. One of the proteins that surrounds the polypeptide exit tunnel on the outside of the ribosome. Forms the main docking site for trigger factor binding to the ribosome. In Synechococcus sp. (strain RCC307), this protein is Large ribosomal subunit protein uL23.